Reading from the N-terminus, the 153-residue chain is uncharacterized protein (153 aa).

It localises to the mitochondrion. This is an uncharacterized protein from Arabidopsis thaliana (Mouse-ear cress).